A 276-amino-acid chain; its full sequence is uncharacterized protein (276 aa).

An AB hydrolase-1 domain is found at 20–137 (PVLIFIPGAN…PPINTFLPDS (118 aa)). The disordered stretch occupies residues 57 to 76 (GESELTEPLPDSASNPDSDY).

This sequence belongs to the AB hydrolase superfamily.

This is an uncharacterized protein from Staphylococcus aureus (strain USA300).